We begin with the raw amino-acid sequence, 281 residues long: Nucleoid occlusion protein (281 aa).

Positions 1-24 are disordered; it reads MKHPFSRLFSFGEKEQEEMEEKQE. The segment at residues 145–164 is a DNA-binding region (H-T-H motif); sequence EALAQRLGKGQSTIANKLRL.

It belongs to the ParB family.

It is found in the cytoplasm. The protein localises to the nucleoid. Effects nucleoid occlusion by binding relatively nonspecifically to DNA and preventing the assembly of the division machinery in the vicinity of the nucleoid, especially under conditions that disturb the cell cycle. It helps to coordinate cell division and chromosome segregation by preventing the formation of the Z ring through the nucleoid, which would cause chromosome breakage. In Geobacillus kaustophilus (strain HTA426), this protein is Nucleoid occlusion protein.